The primary structure comprises 307 residues: Actin maturation protease (307 aa).

The tract at residues 1–34 is disordered; the sequence is MSLENDAAAPPPPPLPPPPPPQPPSLARSESSKK. The segment covering 9–24 has biased composition (pro residues); sequence APPPPPLPPPPPPQPP. The segment at 80-200 is peptidase C39-like; that stretch reads SLIQDGPQCG…WAVASGILLG (121 aa). Cys88 is a catalytic residue.

The protein belongs to the ACTMAP family.

Its subcellular location is the cytoplasm. It catalyses the reaction N-terminal N(alpha)-acetyl-L-methionyl-L-aspartyl-[protein] + H2O = N-terminal L-aspartyl-[protein] + N-acetyl-L-methionine. The enzyme catalyses N-terminal N(alpha)-acetyl-L-methionyl-L-glutamyl-[protein] + H2O = N-terminal L-glutamyl-[protein] + N-acetyl-L-methionine. The catalysed reaction is N-terminal N(alpha)-acetyl-L-cysteinyl-L-aspartyl-[protein] + H2O = N-terminal L-aspartyl-[protein] + N-acetyl-L-cysteine. It carries out the reaction N-terminal N(alpha)-acetyl-L-cysteinyl-L-glutamyl-[protein] + H2O = N-terminal L-glutamyl-[protein] + N-acetyl-L-cysteine. Actin maturation protease that specifically mediates the cleavage of immature acetylated N-terminal actin, thereby contributing to actin maturation. Cleaves N-terminal acetylated methionine of immature cytoplasmic actin after translation. Cleaves N-terminal acetylated cysteine of muscle actin after canonical removal of N-terminal methionine. The polypeptide is Actin maturation protease (Danio rerio (Zebrafish)).